The sequence spans 778 residues: Putative ATP-dependent RNA helicase MJ1505 (778 aa).

The Helicase ATP-binding domain occupies 22-186 (IAANALKKKT…EICENLGIEH (165 aa)). 35–42 (LSTGLGKT) serves as a coordination point for ATP. A DEAH box motif is present at residues 137–140 (DEAH). One can recognise a Helicase C-terminal domain in the interval 338–516 (KVVDMVKNIL…EIKEETEEIK (179 aa)).

It belongs to the DEAD box helicase family. DEAH subfamily.

It catalyses the reaction ATP + H2O = ADP + phosphate + H(+). The sequence is that of Putative ATP-dependent RNA helicase MJ1505 from Methanocaldococcus jannaschii (strain ATCC 43067 / DSM 2661 / JAL-1 / JCM 10045 / NBRC 100440) (Methanococcus jannaschii).